The primary structure comprises 493 residues: Galactose-1-phosphate uridylyltransferase (493 aa).

It belongs to the galactose-1-phosphate uridylyltransferase type 2 family.

The protein resides in the cytoplasm. The catalysed reaction is alpha-D-galactose 1-phosphate + UDP-alpha-D-glucose = alpha-D-glucose 1-phosphate + UDP-alpha-D-galactose. Its pathway is carbohydrate metabolism; galactose metabolism. This chain is Galactose-1-phosphate uridylyltransferase, found in Streptococcus thermophilus (strain CNRZ 1066).